Reading from the N-terminus, the 391-residue chain is Argininosuccinate synthase (391 aa).

6–14 (AYSGGLDTT) provides a ligand contact to ATP. Y84 is an L-citrulline binding site. Residue G114 coordinates ATP. Positions 116, 120, and 121 each coordinate L-aspartate. L-citrulline is bound at residue N120. 5 residues coordinate L-citrulline: R124, S171, S180, E253, and Y265.

It belongs to the argininosuccinate synthase family. Type 1 subfamily. As to quaternary structure, homotetramer.

It localises to the cytoplasm. The enzyme catalyses L-citrulline + L-aspartate + ATP = 2-(N(omega)-L-arginino)succinate + AMP + diphosphate + H(+). It functions in the pathway amino-acid biosynthesis; L-arginine biosynthesis; L-arginine from L-ornithine and carbamoyl phosphate: step 2/3. This Saccharolobus solfataricus (strain ATCC 35092 / DSM 1617 / JCM 11322 / P2) (Sulfolobus solfataricus) protein is Argininosuccinate synthase.